We begin with the raw amino-acid sequence, 310 residues long: tRNA-cytidine(32) 2-sulfurtransferase (310 aa).

A PP-loop motif motif is present at residues 48–53 (SGGKDS). Residues C123, C126, and C214 each contribute to the [4Fe-4S] cluster site.

Belongs to the TtcA family. In terms of assembly, homodimer. Requires Mg(2+) as cofactor. [4Fe-4S] cluster is required as a cofactor.

It localises to the cytoplasm. It carries out the reaction cytidine(32) in tRNA + S-sulfanyl-L-cysteinyl-[cysteine desulfurase] + AH2 + ATP = 2-thiocytidine(32) in tRNA + L-cysteinyl-[cysteine desulfurase] + A + AMP + diphosphate + H(+). It functions in the pathway tRNA modification. Functionally, catalyzes the ATP-dependent 2-thiolation of cytidine in position 32 of tRNA, to form 2-thiocytidine (s(2)C32). The sulfur atoms are provided by the cysteine/cysteine desulfurase (IscS) system. This is tRNA-cytidine(32) 2-sulfurtransferase from Vibrio vulnificus (strain YJ016).